The primary structure comprises 135 residues: ATP synthase epsilon chain (135 aa).

The protein belongs to the ATPase epsilon chain family. F-type ATPases have 2 components, CF(1) - the catalytic core - and CF(0) - the membrane proton channel. CF(1) has five subunits: alpha(3), beta(3), gamma(1), delta(1), epsilon(1). CF(0) has three main subunits: a, b and c.

It is found in the cell inner membrane. In terms of biological role, produces ATP from ADP in the presence of a proton gradient across the membrane. This chain is ATP synthase epsilon chain, found in Brucella abortus (strain S19).